A 349-amino-acid polypeptide reads, in one-letter code: Ribosomal RNA large subunit methyltransferase M (349 aa).

S-adenosyl-L-methionine is bound by residues Ser-183, 216-219 (APGG), Asp-235, Asp-255, and Asp-271. Lys-300 serves as the catalytic Proton acceptor.

This sequence belongs to the class I-like SAM-binding methyltransferase superfamily. RNA methyltransferase RlmE family. RlmM subfamily. Monomer.

The protein resides in the cytoplasm. It catalyses the reaction cytidine(2498) in 23S rRNA + S-adenosyl-L-methionine = 2'-O-methylcytidine(2498) in 23S rRNA + S-adenosyl-L-homocysteine + H(+). Functionally, catalyzes the 2'-O-methylation at nucleotide C2498 in 23S rRNA. This chain is Ribosomal RNA large subunit methyltransferase M, found in Stutzerimonas stutzeri (strain A1501) (Pseudomonas stutzeri).